The primary structure comprises 122 residues: Small ribosomal subunit protein uS13 (122 aa).

Positions arginine 93 to lysine 122 are disordered. Residues alanine 107 to lysine 122 are compositionally biased toward basic residues.

This sequence belongs to the universal ribosomal protein uS13 family. Part of the 30S ribosomal subunit. Forms a loose heterodimer with protein S19. Forms two bridges to the 50S subunit in the 70S ribosome.

Its function is as follows. Located at the top of the head of the 30S subunit, it contacts several helices of the 16S rRNA. In the 70S ribosome it contacts the 23S rRNA (bridge B1a) and protein L5 of the 50S subunit (bridge B1b), connecting the 2 subunits; these bridges are implicated in subunit movement. Contacts the tRNAs in the A and P-sites. The polypeptide is Small ribosomal subunit protein uS13 (Syntrophomonas wolfei subsp. wolfei (strain DSM 2245B / Goettingen)).